Here is a 76-residue protein sequence, read N- to C-terminus: Short coiled-coil protein B (76 aa).

Positions 6-52 form a coiled coil; the sequence is ENQVELEEKTRLINQVLELQNTLEDLSARVDAVKEENLKLKSENQVL.

Belongs to the SCOC family.

It is found in the golgi apparatus membrane. The protein localises to the golgi apparatus. Its subcellular location is the trans-Golgi network. It localises to the cytoplasm. The protein resides in the cytosol. Functionally, positive regulator of amino acid starvation-induced autophagy. The sequence is that of Short coiled-coil protein B (scocb) from Danio rerio (Zebrafish).